Reading from the N-terminus, the 285-residue chain is Pantothenate synthetase (285 aa).

30–37 (MGNLHQGH) contributes to the ATP binding site. Histidine 37 functions as the Proton donor in the catalytic mechanism. Glutamine 61 lines the (R)-pantoate pocket. Glutamine 61 is a binding site for beta-alanine. 149–152 (GQKD) provides a ligand contact to ATP. Glutamine 155 serves as a coordination point for (R)-pantoate. Residues valine 178 and 186 to 189 (LSSR) each bind ATP.

This sequence belongs to the pantothenate synthetase family. In terms of assembly, homodimer.

The protein localises to the cytoplasm. The catalysed reaction is (R)-pantoate + beta-alanine + ATP = (R)-pantothenate + AMP + diphosphate + H(+). It participates in cofactor biosynthesis; (R)-pantothenate biosynthesis; (R)-pantothenate from (R)-pantoate and beta-alanine: step 1/1. Functionally, catalyzes the condensation of pantoate with beta-alanine in an ATP-dependent reaction via a pantoyl-adenylate intermediate. The sequence is that of Pantothenate synthetase from Aeromonas hydrophila subsp. hydrophila (strain ATCC 7966 / DSM 30187 / BCRC 13018 / CCUG 14551 / JCM 1027 / KCTC 2358 / NCIMB 9240 / NCTC 8049).